The following is a 250-amino-acid chain: Leucyl/phenylalanyl-tRNA--protein transferase (250 aa).

It belongs to the L/F-transferase family.

It is found in the cytoplasm. The catalysed reaction is N-terminal L-lysyl-[protein] + L-leucyl-tRNA(Leu) = N-terminal L-leucyl-L-lysyl-[protein] + tRNA(Leu) + H(+). The enzyme catalyses N-terminal L-arginyl-[protein] + L-leucyl-tRNA(Leu) = N-terminal L-leucyl-L-arginyl-[protein] + tRNA(Leu) + H(+). It carries out the reaction L-phenylalanyl-tRNA(Phe) + an N-terminal L-alpha-aminoacyl-[protein] = an N-terminal L-phenylalanyl-L-alpha-aminoacyl-[protein] + tRNA(Phe). In terms of biological role, functions in the N-end rule pathway of protein degradation where it conjugates Leu, Phe and, less efficiently, Met from aminoacyl-tRNAs to the N-termini of proteins containing an N-terminal arginine or lysine. The polypeptide is Leucyl/phenylalanyl-tRNA--protein transferase (Cupriavidus pinatubonensis (strain JMP 134 / LMG 1197) (Cupriavidus necator (strain JMP 134))).